Here is a 148-residue protein sequence, read N- to C-terminus: Large ribosomal subunit protein bL9 (148 aa).

This sequence belongs to the bacterial ribosomal protein bL9 family.

Its function is as follows. Binds to the 23S rRNA. This is Large ribosomal subunit protein bL9 from Finegoldia magna (strain ATCC 29328 / DSM 20472 / WAL 2508) (Peptostreptococcus magnus).